Here is a 1086-residue protein sequence, read N- to C-terminus: 1,2-beta-oligoglucan phosphorylase (1086 aa).

The Proton donor role is filled by Asp-741.

This sequence belongs to the glycosyl hydrolase 94 family. In terms of assembly, monomer.

The catalysed reaction is [(1-&gt;2)-beta-D-glucosyl](n) + phosphate = [(1-&gt;2)-beta-D-glucosyl](n-1) + alpha-D-glucose 1-phosphate. In terms of biological role, catalyzes the reversible phosphorolysis of beta-(1-&gt;2)-D-glucans. The minimum length of the substrate for the phosphorolytic reaction is 3 D-glucose units. In Listeria innocua serovar 6a (strain ATCC BAA-680 / CLIP 11262), this protein is 1,2-beta-oligoglucan phosphorylase.